Reading from the N-terminus, the 305-residue chain is Homoserine kinase (305 aa).

Pro-93 to Thr-103 is an ATP binding site.

This sequence belongs to the GHMP kinase family. Homoserine kinase subfamily.

The protein resides in the cytoplasm. It carries out the reaction L-homoserine + ATP = O-phospho-L-homoserine + ADP + H(+). It functions in the pathway amino-acid biosynthesis; L-threonine biosynthesis; L-threonine from L-aspartate: step 4/5. Catalyzes the ATP-dependent phosphorylation of L-homoserine to L-homoserine phosphate. This Trichodesmium erythraeum (strain IMS101) protein is Homoserine kinase.